We begin with the raw amino-acid sequence, 263 residues long: 5'-nucleotidase SurE (263 aa).

4 residues coordinate a divalent metal cation: D15, D16, S46, and N102.

This sequence belongs to the SurE nucleotidase family. A divalent metal cation serves as cofactor.

The protein resides in the cytoplasm. It carries out the reaction a ribonucleoside 5'-phosphate + H2O = a ribonucleoside + phosphate. Its function is as follows. Nucleotidase that shows phosphatase activity on nucleoside 5'-monophosphates. In Chlorobaculum tepidum (strain ATCC 49652 / DSM 12025 / NBRC 103806 / TLS) (Chlorobium tepidum), this protein is 5'-nucleotidase SurE.